Here is a 320-residue protein sequence, read N- to C-terminus: Cytochrome f (320 aa).

The N-terminal stretch at 1-35 (MENRNTFSWVKEQMTRSISVSIMIYVITQTSISNA) is a signal peptide. Heme is bound by residues Tyr-36, Cys-56, Cys-59, and His-60. The chain crosses the membrane as a helical span at residues 286–306 (VQGLLFFFASVILAQVFLVLK).

Belongs to the cytochrome f family. The 4 large subunits of the cytochrome b6-f complex are cytochrome b6, subunit IV (17 kDa polypeptide, petD), cytochrome f and the Rieske protein, while the 4 small subunits are PetG, PetL, PetM and PetN. The complex functions as a dimer. Heme is required as a cofactor.

The protein localises to the plastid. It is found in the chloroplast thylakoid membrane. Component of the cytochrome b6-f complex, which mediates electron transfer between photosystem II (PSII) and photosystem I (PSI), cyclic electron flow around PSI, and state transitions. The protein is Cytochrome f of Agrostis stolonifera (Creeping bentgrass).